A 372-amino-acid chain; its full sequence is Chloromuconate cycloisomerase (372 aa).

Residue Lys158 is the Proton acceptor of the active site. Mn(2+) is bound by residues Asp187, Glu213, and Asp238. The active-site Proton donor is Glu316.

It belongs to the mandelate racemase/muconate lactonizing enzyme family. The cofactor is Mn(2+).

It carries out the reaction 2-[(2R)-2-chloro-2,5-dihydro-5-oxofuryl]acetate = 3-chloro-cis,cis-muconate + H(+). Its pathway is aromatic compound metabolism; 3-chlorocatechol degradation. The protein is Chloromuconate cycloisomerase (tfdDII) of Cupriavidus pinatubonensis (strain JMP 134 / LMG 1197) (Cupriavidus necator (strain JMP 134)).